An 83-amino-acid chain; its full sequence is RNA-binding protein Hfq (83 aa).

Positions 10 to 70 constitute a Sm domain; it reads DTFLNQVRKE…ISTVMPLRPI (61 aa).

Belongs to the Hfq family. In terms of assembly, homohexamer.

Functionally, RNA chaperone that binds small regulatory RNA (sRNAs) and mRNAs to facilitate mRNA translational regulation in response to envelope stress, environmental stress and changes in metabolite concentrations. Also binds with high specificity to tRNAs. The protein is RNA-binding protein Hfq of Desulfitobacterium hafniense (strain DSM 10664 / DCB-2).